The following is a 616-amino-acid chain: Chaperone protein HscA (616 aa).

It belongs to the heat shock protein 70 family.

Its function is as follows. Chaperone involved in the maturation of iron-sulfur cluster-containing proteins. Has a low intrinsic ATPase activity which is markedly stimulated by HscB. Involved in the maturation of IscU. In Enterobacter sp. (strain 638), this protein is Chaperone protein HscA.